Here is a 100-residue protein sequence, read N- to C-terminus: NADH-quinone oxidoreductase subunit K (100 aa).

Transmembrane regions (helical) follow at residues Ile2 to Ile22, Ile28 to Ala48, and Leu63 to Trp83.

The protein belongs to the complex I subunit 4L family. As to quaternary structure, NDH-1 is composed of 14 different subunits. Subunits NuoA, H, J, K, L, M, N constitute the membrane sector of the complex.

It localises to the cell inner membrane. The enzyme catalyses a quinone + NADH + 5 H(+)(in) = a quinol + NAD(+) + 4 H(+)(out). Its function is as follows. NDH-1 shuttles electrons from NADH, via FMN and iron-sulfur (Fe-S) centers, to quinones in the respiratory chain. The immediate electron acceptor for the enzyme in this species is believed to be ubiquinone. Couples the redox reaction to proton translocation (for every two electrons transferred, four hydrogen ions are translocated across the cytoplasmic membrane), and thus conserves the redox energy in a proton gradient. This chain is NADH-quinone oxidoreductase subunit K, found in Helicobacter hepaticus (strain ATCC 51449 / 3B1).